A 303-amino-acid polypeptide reads, in one-letter code: Caspase-7 (303 aa).

The segment at 1-27 is disordered; the sequence is MADDQNCAPELEKADPSGEDGVDAKPD. A2 bears the N-acetylalanine mark. The propeptide at 2 to 23 is N-terminally processed; the sequence is ADDQNCAPELEKADPSGEDGVD. Over residues 10–27 the composition is skewed to basic and acidic residues; the sequence is ELEKADPSGEDGVDAKPD. S30 carries the post-translational modification Phosphoserine. An exosite region spans residues 38 to 41; the sequence is KKKK. The loop L1 stretch occupies residues 76 to 87; that stretch reads KNFDKVTGMDVR. The active site involves H144. Phosphothreonine is present on T173. Residue C186 is part of the active site. A loop L2 region spans residues 187-196; the sequence is RGTELDDGVQ. The propeptide occupies 199–206; sequence SGPINETD. A loop L3 region spans residues 226 to 238; sequence VPGYYSWRNPGKG. S239 bears the Phosphoserine mark. The interval 274–288 is loop L4; it reads ESQCDDPCFNEKKQI.

Belongs to the peptidase C14A family. Heterotetramer that consists of two anti-parallel arranged heterodimers, each one formed by a 20 kDa (p20) and a 11 kDa (p11) subunit. Interacts with XIAP (via its second BIR domain); inhibiting CASP7 activity. Interacts with BIRC6/bruce. Interacts with ATXN3 (short isoform 1). Interacts with HSPA5. Cleavage by different proteases, such as granzyme B (GZMB), caspase-1 (CASP1), caspase-8 (CASP8) or caspase-9 (CASP9) generate the two active subunits. Its involvement in different programmed cell death processes is probably specified by the protease that activates CASP7. Cleaved and activated by initiator caspases (CASP8 and/or CASP9), leading to execution phase of apoptosis. Cleavage and maturation by GZMB regulates granzyme-mediated programmed cell death. Cleaved and activated by CASP1 in response to bacterial infection. Propeptide domains can also be cleaved efficiently by CASP3. Active heterodimers between the small subunit of caspase-7 and the large subunit of CASP3, and vice versa, also occur. Also cleaved at the N-terminus at alternative sites by CAPN1, leading to its activation. Post-translationally, phosphorylation at Ser-30 and Ser-239 by PAK2 inhibits its activity. Phosphorylation at Ser-30 prevents cleavage and activation by initiator caspase CASP9, while phosphorylation at Ser-239 prevents thiol protease activity by preventing substrate-binding. In terms of processing, ubiquitinated by BIRC6; this activity is inhibited by DIABLO/SMAC.

It is found in the cytoplasm. The protein localises to the cytosol. The protein resides in the nucleus. It localises to the secreted. Its subcellular location is the extracellular space. The catalysed reaction is Strict requirement for an Asp residue at position P1 and has a preferred cleavage sequence of Asp-Glu-Val-Asp-|-.. With respect to regulation, during activation, the N-terminal disordered prodomain is removed by cleavage. Concomitantly, double cleavage gives rise to a large Caspase-7 subunit p20 and a small Caspase-7 subunit p11. The two large and two small subunits then assemble to form the active CASP7 complex. Can be cleaved and activated by different caspases, depending on the context. Cleaved and activated by initiator caspases (CASP8 and/or CASP9), leading to execution phase of apoptosis. Cleavage and maturation by GZMB regulates granzyme-mediated programmed cell death. Cleavage and maturation by CASP1 regulates pyroptosis. Inhibited by XIAP, which directly binds to the active site pocket and obstructs substrate entry. Phosphorylation at Ser-30 and Ser-239 by PAK2 inhibits its activity. Inhibited by BIRC6; following inhibition of BIRC6-caspase binding by DIABLO/SMAC, BIRC6 is subjected to caspase cleavage, leading to an increase in active caspases. Functionally, thiol protease involved in different programmed cell death processes, such as apoptosis, pyroptosis or granzyme-mediated programmed cell death, by proteolytically cleaving target proteins. Has a marked preference for Asp-Glu-Val-Asp (DEVD) consensus sequences, with some plasticity for alternate non-canonical sequences. Its involvement in the different programmed cell death processes is probably determined by upstream proteases that activate CASP7. Acts as an effector caspase involved in the execution phase of apoptosis: following cleavage and activation by initiator caspases (CASP8 and/or CASP9), mediates execution of apoptosis by catalyzing cleavage of proteins, such as CLSPN, PARP1, PTGES3 and YY1. Compared to CASP3, acts as a minor executioner caspase and cleaves a limited set of target proteins. Acts as a key regulator of the inflammatory response in response to bacterial infection by catalyzing cleavage and activation of the sphingomyelin phosphodiesterase SMPD1 in the extracellular milieu, thereby promoting membrane repair. Regulates pyroptosis in intestinal epithelial cells: cleaved and activated by CASP1 in response to S.typhimurium infection, promoting its secretion to the extracellular milieu, where it catalyzes activation of SMPD1, generating ceramides that repair membranes and counteract the action of gasdermin-D (GSDMD) pores. Regulates granzyme-mediated programmed cell death in hepatocytes: cleaved and activated by granzyme B (GZMB) in response to bacterial infection, promoting its secretion to the extracellular milieu, where it catalyzes activation of SMPD1, generating ceramides that repair membranes and counteract the action of perforin (PRF1) pores. Following cleavage by CASP1 in response to inflammasome activation, catalyzes processing and inactivation of PARP1, alleviating the transcription repressor activity of PARP1. Acts as an inhibitor of type I interferon production during virus-induced apoptosis by mediating cleavage of antiviral proteins CGAS, IRF3 and MAVS, thereby preventing cytokine overproduction. Cleaves and activates sterol regulatory element binding proteins (SREBPs). Cleaves phospholipid scramblase proteins XKR4, XKR8 and XKR9. Cleaves BIRC6 following inhibition of BIRC6-caspase binding by DIABLO/SMAC. This is Caspase-7 (CASP7) from Mesocricetus auratus (Golden hamster).